The sequence spans 89 residues: Large ribosomal subunit protein eL37A (89 aa).

Residues cysteine 19, cysteine 22, cysteine 34, and cysteine 37 each contribute to the Zn(2+) site. The C4-type zinc finger occupies cysteine 19–cysteine 37.

Belongs to the eukaryotic ribosomal protein eL37 family. As to quaternary structure, component of the large ribosomal subunit (LSU). Mature yeast ribosomes consist of a small (40S) and a large (60S) subunit. The 40S small subunit contains 1 molecule of ribosomal RNA (18S rRNA) and at least 33 different proteins. The large 60S subunit contains 3 rRNA molecules (25S, 5.8S and 5S rRNA) and at least 46 different proteins. Requires Zn(2+) as cofactor.

The protein resides in the cytoplasm. Its function is as follows. Component of the ribosome, a large ribonucleoprotein complex responsible for the synthesis of proteins in the cell. The small ribosomal subunit (SSU) binds messenger RNAs (mRNAs) and translates the encoded message by selecting cognate aminoacyl-transfer RNA (tRNA) molecules. The large subunit (LSU) contains the ribosomal catalytic site termed the peptidyl transferase center (PTC), which catalyzes the formation of peptide bonds, thereby polymerizing the amino acids delivered by tRNAs into a polypeptide chain. The nascent polypeptides leave the ribosome through a tunnel in the LSU and interact with protein factors that function in enzymatic processing, targeting, and the membrane insertion of nascent chains at the exit of the ribosomal tunnel. The polypeptide is Large ribosomal subunit protein eL37A (rpl3703) (Schizosaccharomyces pombe (strain 972 / ATCC 24843) (Fission yeast)).